The following is a 592-amino-acid chain: uncharacterized protein (592 aa).

The first 23 residues, 1 to 23 (MRKAPLLRFTLASLALACSQAFA), serve as a signal peptide directing secretion. Catalysis depends on serine 37, which acts as the Nucleophile. Catalysis depends on residues aspartate 294 and histidine 297. Residues 334–592 (HQDELRNQWQ…PDPGEPGGKP (259 aa)) enclose the Autotransporter domain. Residues 572–592 (FTLTGYTPHTAPDPGEPGGKP) form a disordered region.

The protein belongs to the 'GDSL' lipolytic enzyme family.

This is an uncharacterized protein from Pseudomonas putida (Arthrobacter siderocapsulatus).